A 292-amino-acid chain; its full sequence is Histamine N-methyltransferase (292 aa).

Glu28 serves as a coordination point for substrate. Residues Gly60, Glu89, and Ile142 each coordinate S-adenosyl-L-methionine. Asn283 contacts substrate.

This sequence belongs to the class I-like SAM-binding methyltransferase superfamily. HNMT family. As to quaternary structure, monomer.

Its subcellular location is the cytoplasm. It carries out the reaction histamine + S-adenosyl-L-methionine = N(tau)-methylhistamine + S-adenosyl-L-homocysteine + H(+). Its function is as follows. Inactivates histamine by N-methylation. Plays an important role in degrading histamine and in regulating the airway response to histamine. This Danio rerio (Zebrafish) protein is Histamine N-methyltransferase (hnmt).